We begin with the raw amino-acid sequence, 68 residues long: Serine rich endogenous peptide 22 (68 aa).

Positions 1–25 (MNKALVWLITLLFLIFSATPNRVLA) are cleaved as a signal peptide. The SCOOP motif motif lies at 50 to 64 (KIGVGASNSGHSPGA). A SxS motif essential for MIK2 binding motif is present at residues 56-58 (SNS).

This sequence belongs to the serine rich endogenous peptide (SCOOP) phytocytokine family. Interacts with MIK2 (via extracellular leucine-rich repeat domain); this interaction triggers the formation of complex between MIK2 and the BAK1/SERK3 and SERK4 coreceptors, and subsequent BAK1 activation by phosphorylation.

Its subcellular location is the cell membrane. It localises to the secreted. The protein resides in the extracellular space. It is found in the apoplast. Functionally, brassicaceae-specific phytocytokine (plant endogenous peptide released into the apoplast) perceived by MIK2 in a BAK1/SERK3 and SERK4 coreceptors-dependent manner, that modulates various physiological and antimicrobial processes including growth prevention and reactive oxygen species (ROS) response regulation. The sequence is that of Serine rich endogenous peptide 22 from Arabidopsis thaliana (Mouse-ear cress).